A 149-amino-acid chain; its full sequence is Arginine repressor (149 aa).

This sequence belongs to the ArgR family.

It is found in the cytoplasm. Its pathway is amino-acid biosynthesis; L-arginine biosynthesis [regulation]. In terms of biological role, regulates arginine biosynthesis genes. The sequence is that of Arginine repressor from Geobacillus sp. (strain WCH70).